Consider the following 187-residue polypeptide: UPF0340 protein SMU_87 (187 aa).

This sequence belongs to the UPF0340 family.

This Streptococcus mutans serotype c (strain ATCC 700610 / UA159) protein is UPF0340 protein SMU_87.